The primary structure comprises 322 residues: Sideroflexin-1 (322 aa).

Ser-2 carries the post-translational modification N-acetylserine. Residues Ser-2 to Thr-102 are Mitochondrial matrix-facing. Residues Ile-103 to Trp-120 form a helical membrane-spanning segment. Residues Gln-121 to Glu-146 are Mitochondrial intermembrane-facing. A helical transmembrane segment spans residues Leu-147 to Ala-167. At Leu-168 to Pro-174 the chain is on the mitochondrial matrix side. Residues Leu-175–Leu-195 form a helical membrane-spanning segment. Residues Met-196 to Gln-228 are Mitochondrial intermembrane-facing. Residues Val-229 to Asn-249 traverse the membrane as a helical segment. Topologically, residues Thr-250–Pro-266 are mitochondrial matrix. Residues Ile-267–Phe-287 form a helical membrane-spanning segment. Over Pro-288 to Leu-322 the chain is Mitochondrial intermembrane.

This sequence belongs to the sideroflexin family. In terms of tissue distribution, widely expressed, with highest expression in kidney and liver.

Its subcellular location is the mitochondrion inner membrane. It catalyses the reaction L-serine(in) = L-serine(out). The enzyme catalyses L-alanine(in) = L-alanine(out). The catalysed reaction is L-cysteine(in) = L-cysteine(out). Its function is as follows. Amino acid transporter importing serine, an essential substrate of the mitochondrial branch of the one-carbon pathway, into mitochondria. Mitochondrial serine is then converted to glycine and formate, which exits to the cytosol where it is used to generate the charged folates that serve as one-carbon donors. May also transport other amino acids including alanine and cysteine. This chain is Sideroflexin-1, found in Mus musculus (Mouse).